The following is a 323-amino-acid chain: Beta-ketoacyl-[acyl-carrier-protein] synthase III (323 aa).

Residues Cys-113 and His-250 contribute to the active site. An ACP-binding region spans residues 251–255; the sequence is QANKR. Residue Asn-280 is part of the active site.

This sequence belongs to the thiolase-like superfamily. FabH family. Homodimer.

Its subcellular location is the cytoplasm. The enzyme catalyses malonyl-[ACP] + acetyl-CoA + H(+) = 3-oxobutanoyl-[ACP] + CO2 + CoA. It functions in the pathway lipid metabolism; fatty acid biosynthesis. Functionally, catalyzes the condensation reaction of fatty acid synthesis by the addition to an acyl acceptor of two carbons from malonyl-ACP. Catalyzes the first condensation reaction which initiates fatty acid synthesis and may therefore play a role in governing the total rate of fatty acid production. Possesses both acetoacetyl-ACP synthase and acetyl transacylase activities. Its substrate specificity determines the biosynthesis of branched-chain and/or straight-chain of fatty acids. In Brucella melitensis biotype 2 (strain ATCC 23457), this protein is Beta-ketoacyl-[acyl-carrier-protein] synthase III.